A 313-amino-acid chain; its full sequence is Porphobilinogen deaminase (313 aa).

S-(dipyrrolylmethanemethyl)cysteine is present on C242.

Belongs to the HMBS family. As to quaternary structure, monomer. It depends on dipyrromethane as a cofactor.

It carries out the reaction 4 porphobilinogen + H2O = hydroxymethylbilane + 4 NH4(+). Its pathway is porphyrin-containing compound metabolism; protoporphyrin-IX biosynthesis; coproporphyrinogen-III from 5-aminolevulinate: step 2/4. In terms of biological role, tetrapolymerization of the monopyrrole PBG into the hydroxymethylbilane pre-uroporphyrinogen in several discrete steps. In Salmonella dublin (strain CT_02021853), this protein is Porphobilinogen deaminase.